A 29-amino-acid chain; its full sequence is Photosystem I reaction center subunit XII (29 aa).

Residues 7-26 (IFVALILALFSFVLAIRLGT) form a helical membrane-spanning segment.

The protein belongs to the PsaM family.

The protein resides in the plastid. The protein localises to the chloroplast thylakoid membrane. This chain is Photosystem I reaction center subunit XII, found in Guillardia theta (Cryptophyte).